A 103-amino-acid chain; its full sequence is Large ribosomal subunit protein bL21 (103 aa).

Belongs to the bacterial ribosomal protein bL21 family. As to quaternary structure, part of the 50S ribosomal subunit. Contacts protein L20.

In terms of biological role, this protein binds to 23S rRNA in the presence of protein L20. This chain is Large ribosomal subunit protein bL21, found in Escherichia coli O127:H6 (strain E2348/69 / EPEC).